The chain runs to 216 residues: ATP phosphoribosyltransferase (216 aa).

It belongs to the ATP phosphoribosyltransferase family. Short subfamily. In terms of assembly, heteromultimer composed of HisG and HisZ subunits.

The protein resides in the cytoplasm. The catalysed reaction is 1-(5-phospho-beta-D-ribosyl)-ATP + diphosphate = 5-phospho-alpha-D-ribose 1-diphosphate + ATP. Its pathway is amino-acid biosynthesis; L-histidine biosynthesis; L-histidine from 5-phospho-alpha-D-ribose 1-diphosphate: step 1/9. Catalyzes the condensation of ATP and 5-phosphoribose 1-diphosphate to form N'-(5'-phosphoribosyl)-ATP (PR-ATP). Has a crucial role in the pathway because the rate of histidine biosynthesis seems to be controlled primarily by regulation of HisG enzymatic activity. The protein is ATP phosphoribosyltransferase of Acidovorax ebreus (strain TPSY) (Diaphorobacter sp. (strain TPSY)).